The following is a 208-amino-acid chain: Small ribosomal subunit protein uS4 (208 aa).

An S4 RNA-binding domain is found at 98–158 (RRLDNVVYRL…EKSRKIACIN (61 aa)).

This sequence belongs to the universal ribosomal protein uS4 family. Part of the 30S ribosomal subunit. Contacts protein S5. The interaction surface between S4 and S5 is involved in control of translational fidelity.

In terms of biological role, one of the primary rRNA binding proteins, it binds directly to 16S rRNA where it nucleates assembly of the body of the 30S subunit. Its function is as follows. With S5 and S12 plays an important role in translational accuracy. This Geobacter metallireducens (strain ATCC 53774 / DSM 7210 / GS-15) protein is Small ribosomal subunit protein uS4.